Here is a 1422-residue protein sequence, read N- to C-terminus: Cardiac-enriched FHL2-interacting protein (1422 aa).

Residues 1 to 23 (MQGNKKCADGFSDTSSIGSVLDE) are disordered. A Phosphothreonine modification is found at Thr-119. Disordered regions lie at residues 151 to 177 (RTEAQPCDSRPPPSKPPALKNTPKFAH), 199 to 265 (AGVS…GRGK), 279 to 443 (SAFE…SSPF), 459 to 500 (LETS…KAPS), 516 to 718 (YSPL…SDSQ), 731 to 850 (FSTS…TNKH), 877 to 1127 (VSSE…HLER), 1142 to 1244 (TGAA…GWEP), and 1353 to 1422 (RQGS…EGVS). Residues 201–210 (VSSTHQSSHQ) are compositionally biased toward polar residues. Basic and acidic residues-rich tracts occupy residues 284 to 298 (WDAHQPKLRERKDIT) and 305 to 315 (KAPKHYEDMPL). Residue Ser-327 is modified to Phosphoserine. Polar residues predominate over residues 342-351 (SPSGIQSTSG). Positions 395-405 (GPHDASEDKKQ) are enriched in basic and acidic residues. Polar residues predominate over residues 461–470 (TSDTQPVETS). Ser-472 bears the Phosphoserine mark. 3 stretches are compositionally biased toward basic and acidic residues: residues 481–495 (QEKESSEAQSRDSYK), 524–537 (GFDEKTRGKLDGKQ), and 579–588 (PAMDSRESFA). The span at 590-606 (SHPTFSSPSASSKTHFS) shows a compositional bias: low complexity. Basic and acidic residues-rich tracts occupy residues 611 to 622 (AAERNSHEKEEA), 635 to 644 (WHPDSRENLP), and 653 to 675 (CNRDSETGQATEKMKPRQLEKRL). Low complexity predominate over residues 731-744 (FSTSSSDQSFASFE). Residues 790-801 (GVEEHRQKETQR) show a composition bias toward basic and acidic residues. At Ser-815 the chain carries Phosphoserine. Positions 828-839 (ADKDTALSHAKD) are enriched in basic and acidic residues. Polar residues-rich tracts occupy residues 907–926 (SESQEMRNTPLSNSTPSTEQ) and 944–954 (QDETSQQTRKG). Positions 975–991 (ADERLAHEKSRSADSGK) are enriched in basic and acidic residues. Over residues 1048 to 1067 (AATSPNPSSLGGSSTCSPAA) the composition is skewed to polar residues. The span at 1087 to 1099 (PPGPGPWASPGPS) shows a compositional bias: pro residues. Positions 1173-1184 (RRAKKLASKRRK) are enriched in basic residues. Residues 1185-1202 (SDQMSEKHTEAWEGKSFT) show a composition bias toward basic and acidic residues. Polar residues predominate over residues 1353–1366 (RQGSSHRPQSSQGA). Residues 1411-1422 (DDLEDFATEGVS) are compositionally biased toward acidic residues.

As to quaternary structure, interacts with FHL2.

The protein localises to the cytoplasm. The protein resides in the myofibril. It localises to the sarcomere. Its subcellular location is the z line. Its function is as follows. Plays an important role in cardiomyocyte hypertrophy via activation of the calcineurin/NFAT signaling pathway. This chain is Cardiac-enriched FHL2-interacting protein, found in Rattus norvegicus (Rat).